The chain runs to 995 residues: MSAEAADREAATSSRPCTPPQTCWFEFLLEESLLEKHLRKACPDPAPVQLIVQFLEQASKPSVNEQNQVQPPPDNKRNRVLKLLALKVAAHLKWDLDILEKSLSVPVLNMLLNELLCISKVPPGTKHVDMDLSALPPTTAMAILLYNRWAIRTIVQSSFPVKQAKPGPPQLNVMNQMQQEKELTENILKVLKEQAADCILVLEAALRLNKDLYVHTMRTLDLLAVEPGTVNGETENSTAGLKIRTEEMQCQVCYDLGAAYFQQGSTDSAIYENAREKFFRTKELLAEIGSLSLHCTIDEKRLAGYCQACDVLVPSSDNNSQQLTPYSQVHICLRSGSYQEVVQIFIEDNLTFTLPVQFRQSVLRELFQKAQQGNEALDEICFKICVCNTVRDVLEGRTISVQFNQLFLRPNKEKIDFLLEVCSRSINVEKASDSLKGNMAAFLKNVCLGLEDLQYVFMISSHELFITLLKDEERKLLVDQMRKRSPRVNLCIKPVTSFYDIPASASVNIGQLEHQLILSVDPWRIRQILIELHGMTSERQFWTVSNKWEVPSVYSSVILGIKDNLTRDLVYILMAKGLHCSTVKDFPHSKQLFTACLELVTEFSPKLRQVMLNEMLLLDIRTHEAGVGQSGERPPSDLISRVRGYLEMRLPDIPLRQVVAEECVAFMLNWRENEYLTLQVPAFLFQNNPYVKLGQLLAATCKELPGPKESRRTAKDLWEVVVQICSVSNQHKRGNDGRVSLIKQRESTLGIMYRSELLSFIKKLREPLVLTIILSLFVKLHNVREDIVNDITAEHISIWPSSIPNLQSVDFEAVAITVKELVRYTLSINPNNHAWLIIQADIYFATNQHSAALHYYLQAGAVCSDFFNKAVPPDVYTDQVIKRMIKCCSLLNCHTQVAILCQFLREIDYKTAFKSLQEQNSHDAMDSYYDYIWDVTILEYLTYLHHKRGETDKRQIAIKAIGQTELNASNPEEVLQLAAQRRKKKFLQAMAKLYF.

Phosphothreonine is present on threonine 18. The WFEF motif signature appears at 24–29 (WFEFLL). TPR repeat units lie at residues 250 to 288 (CQVCYDLGAAYFQQGSTDSAIYENAREKFFRTKELLAEI), 320 to 356 (SQQLTPYSQVHICLRSGSYQEVVQIFIEDNLTFTLPV), 570 to 603 (VYILMAKGLHCSTVKDFPHSKQLFTACLELVTEF), and 833 to 866 (HAWLIIQADIYFATNQHSAALHYYLQAGAVCSDF).

Belongs to the Integrator subunit 8 family. As to quaternary structure, component of the Integrator complex, composed of core subunits INTS1, INTS2, INTS3, INTS4, INTS5, INTS6, INTS7, INTS8, INTS9/RC74, INTS10, INTS11/CPSF3L, INTS12, INTS13, INTS14 and INTS15. The core complex associates with protein phosphatase 2A subunits PPP2CA and PPP2R1A, to form the Integrator-PP2A (INTAC) complex.

It localises to the nucleus. The protein localises to the chromosome. Functionally, component of the integrator complex, a multiprotein complex that terminates RNA polymerase II (Pol II) transcription in the promoter-proximal region of genes. The integrator complex provides a quality checkpoint during transcription elongation by driving premature transcription termination of transcripts that are unfavorably configured for transcriptional elongation: the complex terminates transcription by (1) catalyzing dephosphorylation of the C-terminal domain (CTD) of Pol II subunit POLR2A/RPB1 and SUPT5H/SPT5, (2) degrading the exiting nascent RNA transcript via endonuclease activity and (3) promoting the release of Pol II from bound DNA. The integrator complex is also involved in terminating the synthesis of non-coding Pol II transcripts, such as enhancer RNAs (eRNAs), small nuclear RNAs (snRNAs), telomerase RNAs and long non-coding RNAs (lncRNAs). Within the integrator complex, INTS8 is required for the recruitment of protein phosphatase 2A (PP2A) to transcription pause-release checkpoint. The protein is Integrator complex subunit 8 (Ints8) of Mus musculus (Mouse).